The following is a 69-amino-acid chain: Snake venom metalloproteinase BnP2 (69 aa).

The 69-residue stretch at tyrosine 1 to arginine 69 folds into the Peptidase M12B domain. A Ca(2+)-binding site is contributed by glutamate 3.

It belongs to the venom metalloproteinase (M12B) family. P-I subfamily. In terms of assembly, monomer. Requires Zn(2+) as cofactor. In terms of tissue distribution, expressed by the venom gland.

It localises to the secreted. Its activity is regulated as follows. Inhibited by EDTA. Its function is as follows. This protein is a zinc protease from snake venom that is devoid of significant myotoxic and hemorrhagic activities. It hydrolyzes the Aalpha-chain and more slowly the Bbeta-chain of fibrin and fibrinogen, without affecting the gamma-chains. It induces cell detachment and a apoptosis (anoikis) in endothelial cells. This Bothrops pauloensis (Neuwied's lancehead) protein is Snake venom metalloproteinase BnP2.